A 592-amino-acid polypeptide reads, in one-letter code: Aspartate--tRNA(Asp/Asn) ligase (592 aa).

Glu-175 is a binding site for L-aspartate. The interval Gln-199–Lys-202 is aspartate. Arg-221 contacts L-aspartate. ATP is bound by residues Arg-221–Glu-223 and Gln-230. Residue His-450 participates in L-aspartate binding. Glu-483 is a binding site for ATP. Arg-490 provides a ligand contact to L-aspartate. Gly-535–Arg-538 is a binding site for ATP.

The protein belongs to the class-II aminoacyl-tRNA synthetase family. Type 1 subfamily. Homodimer.

It is found in the cytoplasm. It carries out the reaction tRNA(Asx) + L-aspartate + ATP = L-aspartyl-tRNA(Asx) + AMP + diphosphate. Aspartyl-tRNA synthetase with relaxed tRNA specificity since it is able to aspartylate not only its cognate tRNA(Asp) but also tRNA(Asn). Reaction proceeds in two steps: L-aspartate is first activated by ATP to form Asp-AMP and then transferred to the acceptor end of tRNA(Asp/Asn). This is Aspartate--tRNA(Asp/Asn) ligase from Acinetobacter baumannii (strain AB307-0294).